Consider the following 306-residue polypeptide: Recombination-associated protein RdgC (306 aa).

It belongs to the RdgC family.

It is found in the cytoplasm. The protein localises to the nucleoid. In terms of biological role, may be involved in recombination. The polypeptide is Recombination-associated protein RdgC (Pseudomonas aeruginosa (strain LESB58)).